The chain runs to 378 residues: MNFTVKYSFLVICLLCCLLSTYVSVIEGHRARPGESRKNPREIIKTFKESGKGIIQGYYPSWVSYNHNLKDLNPNLNVVHMSFAKMDLSYDSIESIVGSPLLFKSLIGLEYIGLNEYFNDAMNLRKARPDIIMLLSLGGETYHPSSFDSALNAVEKIANLVDELGFDGIDVDYEPNGSFDGLNDKEKADFFVQYVTKLREYMCDDKLISISQSSNGALSCIGFNDPKKICMDDEAPYNSKYFNKPDVKKELLRAAQMASAGGAIYLMNNLKDMIDMVFVQTFNYTNSTDSTVMKELYDSYAYYGKKYDYVIIMGFTLMFPSTPFNPNDKMLVKSIGDFVKTENKLNKRADGFGLWSLSSDNAAHNEQLAIEYFVESLH.

The N-terminal stretch at 1–28 (MNFTVKYSFLVICLLCCLLSTYVSVIEG) is a signal peptide. Residues 53-378 (GIIQGYYPSW…AIEYFVESLH (326 aa)) form the GH18 domain. Glutamate 174 acts as the Proton donor in catalysis. An intrachain disulfide couples cysteine 220 to cysteine 230.

This sequence belongs to the glycosyl hydrolase 18 family. In terms of assembly, forms a hetero-multimeric, high molecular weight complex composed of at least CHT1, SOAP AND WARP. Within the complex, may interact with WARP via a disulfide bond.

It is found in the secreted. It localises to the cytoplasmic vesicle. The protein localises to the secretory vesicle. The protein resides in the microneme. It carries out the reaction Random endo-hydrolysis of N-acetyl-beta-D-glucosaminide (1-&gt;4)-beta-linkages in chitin and chitodextrins.. Its activity is regulated as follows. Inhibited by allosamidin. Functionally, endochitinase that cleaves beta-1,4-linkages between tri- and tetramers of N-acetylglucosamine (GlcNAc) from penta- and hexameric chitin oligomers. Does not cleave smaller chitin oligosaccharides. Required to cross the acellular, chitin-containing peritrophic matrix (PM) which is formed around the ingested blood meal in the mosquito midgut allowing the ookinete to invade the mosquito gut epithelium. The chain is Chitinase from Plasmodium falciparum (isolate 3D7).